We begin with the raw amino-acid sequence, 349 residues long: Protein RecA (349 aa).

65–72 (GPESSGKT) serves as a coordination point for ATP.

The protein belongs to the RecA family.

Its subcellular location is the cytoplasm. Functionally, can catalyze the hydrolysis of ATP in the presence of single-stranded DNA, the ATP-dependent uptake of single-stranded DNA by duplex DNA, and the ATP-dependent hybridization of homologous single-stranded DNAs. It interacts with LexA causing its activation and leading to its autocatalytic cleavage. The polypeptide is Protein RecA (Clostridium acetobutylicum (strain ATCC 824 / DSM 792 / JCM 1419 / IAM 19013 / LMG 5710 / NBRC 13948 / NRRL B-527 / VKM B-1787 / 2291 / W)).